The primary structure comprises 96 residues: Pro-glucagon (96 aa).

Basic and acidic residues-rich tracts occupy residues Leu1–Ala12 and Glu19–Ser30. The segment at Leu1–Ser35 is disordered.

This sequence belongs to the glucagon family.

It localises to the secreted. Plays a key role in glucose metabolism and homeostasis. Regulates blood glucose by increasing gluconeogenesis and decreasing glycolysis. This chain is Pro-glucagon (gcg), found in Myoxocephalus scorpius (Shorthorn sculpin).